An 84-amino-acid polypeptide reads, in one-letter code: MRKLKKKKEKIGIVISNKMKKTIIISETKRIKHPYYKKVILKKKKYYVHDEHNISNEGDLVKIIETRPLSKQKFWRLLKIVKKK.

Belongs to the universal ribosomal protein uS17 family. As to quaternary structure, part of the 30S ribosomal subunit.

Its function is as follows. One of the primary rRNA binding proteins, it binds specifically to the 5'-end of 16S ribosomal RNA. The protein is Small ribosomal subunit protein uS17 of Karelsulcia muelleri (strain GWSS) (Sulcia muelleri).